The sequence spans 148 residues: Large ribosomal subunit protein bL9 (148 aa).

This sequence belongs to the bacterial ribosomal protein bL9 family.

Binds to the 23S rRNA. The polypeptide is Large ribosomal subunit protein bL9 (Chloroflexus aurantiacus (strain ATCC 29366 / DSM 635 / J-10-fl)).